The sequence spans 295 residues: Nucleotide-binding protein RBAM_031990 (295 aa).

16 to 23 contacts ATP; it reads GMSGAGKT. GTP is bound at residue 67 to 70; the sequence is DLRG.

This sequence belongs to the RapZ-like family.

Its function is as follows. Displays ATPase and GTPase activities. The protein is Nucleotide-binding protein RBAM_031990 of Bacillus velezensis (strain DSM 23117 / BGSC 10A6 / LMG 26770 / FZB42) (Bacillus amyloliquefaciens subsp. plantarum).